Consider the following 263-residue polypeptide: Tryptophan 2,3-dioxygenase (263 aa).

Residues 32–36, tyrosine 94, and arginine 98 contribute to the substrate site; that span reads FIIVH. Histidine 221 provides a ligand contact to heme. Threonine 235 is a binding site for substrate.

Belongs to the tryptophan 2,3-dioxygenase family. Homotetramer. Requires heme as cofactor.

It catalyses the reaction L-tryptophan + O2 = N-formyl-L-kynurenine. The protein operates within amino-acid degradation; L-tryptophan degradation via kynurenine pathway; L-kynurenine from L-tryptophan: step 1/2. Its function is as follows. Heme-dependent dioxygenase that catalyzes the oxidative cleavage of the L-tryptophan (L-Trp) pyrrole ring and converts L-tryptophan to N-formyl-L-kynurenine. Catalyzes the oxidative cleavage of the indole moiety. The sequence is that of Tryptophan 2,3-dioxygenase from Erythrobacter litoralis (strain HTCC2594).